The primary structure comprises 492 residues: 3-ketoacyl-CoA synthase 5 (492 aa).

2 helical membrane-spanning segments follow: residues 20–40 (LINN…AIEL) and 59–79 (LLHI…YFMS). Residues 76-365 (YFMSKPRTVY…FLSSLIGRKI (290 aa)) form the FAE domain. Catalysis depends on residues Cys-220, His-299, His-383, His-387, His-416, and Asn-420.

This sequence belongs to the thiolase-like superfamily. Chalcone/stilbene synthases family. In terms of tissue distribution, expressed in siliques, flowers, leaves and seedlings.

It is found in the membrane. It catalyses the reaction a very-long-chain acyl-CoA + malonyl-CoA + H(+) = a very-long-chain 3-oxoacyl-CoA + CO2 + CoA. It participates in lipid metabolism; fatty acid biosynthesis. With respect to regulation, inhibited by K3 herbicides such as alachlor, allidochlor, anilofos, cafenstrole and flufenacet. Strongly inhibited by metazachlor and mefluidide. Its function is as follows. Mediates mostly the synthesis of VLCFAs from 26 to 30 carbons in length (e.g. C20:1, C26, C28, C30). The polypeptide is 3-ketoacyl-CoA synthase 5 (Arabidopsis thaliana (Mouse-ear cress)).